We begin with the raw amino-acid sequence, 537 residues long: Ataxin-10 homolog (537 aa).

It belongs to the ataxin-10 family.

Its subcellular location is the cytoplasm. Functionally, may play a role in the regulation of cytokinesis. The polypeptide is Ataxin-10 homolog (CTR86) (Kluyveromyces lactis (strain ATCC 8585 / CBS 2359 / DSM 70799 / NBRC 1267 / NRRL Y-1140 / WM37) (Yeast)).